We begin with the raw amino-acid sequence, 228 residues long: Urease accessory protein UreF (228 aa).

Belongs to the UreF family. UreD, UreF and UreG form a complex that acts as a GTP-hydrolysis-dependent molecular chaperone, activating the urease apoprotein by helping to assemble the nickel containing metallocenter of UreC. The UreE protein probably delivers the nickel.

It is found in the cytoplasm. In terms of biological role, required for maturation of urease via the functional incorporation of the urease nickel metallocenter. This chain is Urease accessory protein UreF, found in Prochlorococcus marinus (strain AS9601).